A 256-amino-acid chain; its full sequence is Ubiquinone/menaquinone biosynthesis C-methyltransferase UbiE (256 aa).

S-adenosyl-L-methionine contacts are provided by residues Thr-79, Asp-100, and 128–129 (DA).

Belongs to the class I-like SAM-binding methyltransferase superfamily. MenG/UbiE family.

The catalysed reaction is a 2-demethylmenaquinol + S-adenosyl-L-methionine = a menaquinol + S-adenosyl-L-homocysteine + H(+). It catalyses the reaction a 2-methoxy-6-(all-trans-polyprenyl)benzene-1,4-diol + S-adenosyl-L-methionine = a 5-methoxy-2-methyl-3-(all-trans-polyprenyl)benzene-1,4-diol + S-adenosyl-L-homocysteine + H(+). Its pathway is quinol/quinone metabolism; menaquinone biosynthesis; menaquinol from 1,4-dihydroxy-2-naphthoate: step 2/2. It participates in cofactor biosynthesis; ubiquinone biosynthesis. In terms of biological role, methyltransferase required for the conversion of demethylmenaquinol (DMKH2) to menaquinol (MKH2) and the conversion of 2-polyprenyl-6-methoxy-1,4-benzoquinol (DDMQH2) to 2-polyprenyl-3-methyl-6-methoxy-1,4-benzoquinol (DMQH2). This Pseudomonas aeruginosa (strain LESB58) protein is Ubiquinone/menaquinone biosynthesis C-methyltransferase UbiE.